We begin with the raw amino-acid sequence, 699 residues long: Long-chain-fatty-acid--CoA ligase 1 (699 aa).

An N-acetylmethionine modification is found at M1. Residue Y9 is modified to 3'-nitrotyrosine. A helical; Signal-anchor for type III membrane protein transmembrane segment spans residues 25–45 (LPTNTLMGFGAFAALTTFWYA). Residues 46–699 (TRPKALKPPC…IDELYSTIKI (654 aa)) are Cytoplasmic-facing. A Phosphotyrosine modification is found at Y85. Y86 bears the 3'-nitrotyrosine mark. O-linked (GlcNAc) serine glycosylation occurs at S136. An N6-acetyllysine mark is found at K208, K357, and K387. At S621 the chain carries Phosphoserine. N6-acetyllysine is present on K633.

The protein belongs to the ATP-dependent AMP-binding enzyme family. Requires Mg(2+) as cofactor. In terms of tissue distribution, liver, heart, epididymal adipose and to a lesser extent brain, small intestine and lung.

Its subcellular location is the mitochondrion outer membrane. The protein resides in the peroxisome membrane. It is found in the microsome membrane. The protein localises to the endoplasmic reticulum membrane. It catalyses the reaction a long-chain fatty acid + ATP + CoA = a long-chain fatty acyl-CoA + AMP + diphosphate. It carries out the reaction (5Z,8Z,11Z,14Z)-eicosatetraenoate + ATP + CoA = (5Z,8Z,11Z,14Z)-eicosatetraenoyl-CoA + AMP + diphosphate. The catalysed reaction is 3,7,11,15-tetramethylhexadecanoate + ATP + CoA = phytanoyl-CoA + AMP + diphosphate. The enzyme catalyses hexadecanoate + ATP + CoA = hexadecanoyl-CoA + AMP + diphosphate. It catalyses the reaction (E)-hexadec-2-enoate + ATP + CoA = (2E)-hexadecenoyl-CoA + AMP + diphosphate. It carries out the reaction 2,6,10,14-tetramethylpentadecanoate + ATP + CoA = pristanoyl-CoA + AMP + diphosphate. The catalysed reaction is 14,15-epoxy-(5Z,8Z,11Z)-eicosatrienoate + ATP + CoA = 14,15-epoxy-(5Z,8Z,11Z)-eicosatrienoyl-CoA + AMP + diphosphate. The enzyme catalyses 5-hydroxy-(6E,8Z,11Z,14Z)-eicosatetraenoate + ATP + CoA = 5-hydroxy-(6E,8Z,11Z,14Z)-eicosatetraenoyl-CoA + AMP + diphosphate. It catalyses the reaction 12-hydroxy-(5Z,8Z,10E,14Z)-eicosatetraenoate + ATP + CoA = 12-hydroxy-(5Z,8Z,10E,14Z)-eicosatetraenoyl-CoA + AMP + diphosphate. It carries out the reaction 15-hydroxy-(5Z,8Z,11Z,13E)-eicosatetraenoate + ATP + CoA = 15-hydroxy-(5Z,8Z,11Z,13E)-eicosatetraenoyl-CoA + AMP + diphosphate. The catalysed reaction is (9Z)-octadecenoate + ATP + CoA = (9Z)-octadecenoyl-CoA + AMP + diphosphate. Inhibited at high temperature and by arachidonate. In terms of biological role, catalyzes the conversion of long-chain fatty acids to their active form acyl-CoAs for both synthesis of cellular lipids, and degradation via beta-oxidation. Preferentially uses palmitoleate, oleate and linoleate. Preferentially activates arachidonate than epoxyeicosatrienoic acids (EETs) or hydroxyeicosatrienoic acids (HETEs). This Rattus norvegicus (Rat) protein is Long-chain-fatty-acid--CoA ligase 1.